The primary structure comprises 158 residues: 6,7-dimethyl-8-ribityllumazine synthase (158 aa).

5-amino-6-(D-ribitylamino)uracil contacts are provided by residues Trp28, 59-61, and 81-83; these read TVE and VVV. Residue 86 to 87 coordinates (2S)-2-hydroxy-3-oxobutyl phosphate; the sequence is DT. Residue His89 is the Proton donor of the active site. Phe114 contributes to the 5-amino-6-(D-ribitylamino)uracil binding site. Position 128 (Arg128) interacts with (2S)-2-hydroxy-3-oxobutyl phosphate.

It belongs to the DMRL synthase family.

It catalyses the reaction (2S)-2-hydroxy-3-oxobutyl phosphate + 5-amino-6-(D-ribitylamino)uracil = 6,7-dimethyl-8-(1-D-ribityl)lumazine + phosphate + 2 H2O + H(+). It participates in cofactor biosynthesis; riboflavin biosynthesis; riboflavin from 2-hydroxy-3-oxobutyl phosphate and 5-amino-6-(D-ribitylamino)uracil: step 1/2. Functionally, catalyzes the formation of 6,7-dimethyl-8-ribityllumazine by condensation of 5-amino-6-(D-ribitylamino)uracil with 3,4-dihydroxy-2-butanone 4-phosphate. This is the penultimate step in the biosynthesis of riboflavin. The sequence is that of 6,7-dimethyl-8-ribityllumazine synthase from Micrococcus luteus (strain ATCC 4698 / DSM 20030 / JCM 1464 / CCM 169 / CCUG 5858 / IAM 1056 / NBRC 3333 / NCIMB 9278 / NCTC 2665 / VKM Ac-2230) (Micrococcus lysodeikticus).